Consider the following 561-residue polypeptide: Putative transport protein YbjL (561 aa).

The next 5 helical transmembrane spans lie at 8–28 (LLNGNYILLLFVVLALGLCLG), 32–52 (LGSVQLGNSIGVLVVSLLLGQ), 66–86 (FMLFIFCVGVEAGPNFFSIFF), 94–114 (MLALVMVGSALLIALGLGKLF), and 158–178 (NLSLGYALTYLIGLVSLIVGA). RCK C-terminal domains follow at residues 200–288 (RGLD…SFRN) and 292–373 (VFDR…RIGF). Transmembrane regions (helical) follow at residues 383–403 (LLAFCAFFIIGLMIGMITFQF), 406–426 (FSFGIGNAAGLLFAGIMLGFL), 447–467 (FGLMVFMAGVGLSAGSGINNG), 475–495 (MLIAGLVVSLVPVVICFLFGA), and 540–560 (AIANVLLTLAGTLIVIIWPGL).

This sequence belongs to the AAE transporter (TC 2.A.81) family. YbjL subfamily.

Its subcellular location is the cell membrane. The polypeptide is Putative transport protein YbjL (Salmonella paratyphi C (strain RKS4594)).